Consider the following 512-residue polypeptide: uncharacterized protein (512 aa).

The next 2 membrane-spanning stretches (helical) occupy residues 20-40 and 222-242; these read IFPV…IYIW and GIAL…FGYI. Residues 297–512 enclose the Histidine kinase domain; the sequence is EQLIQSIEQT…TLMCYQIPLV (216 aa). H325 is subject to Phosphohistidine; by autocatalysis.

Post-translationally, autophosphorylated.

The protein localises to the cell membrane. The catalysed reaction is ATP + protein L-histidine = ADP + protein N-phospho-L-histidine.. Functionally, probable member of the two-component regulatory system SE_0166/SE_0165. May activate SE_0165 by phosphorylation. This is an uncharacterized protein from Staphylococcus epidermidis (strain ATCC 12228 / FDA PCI 1200).